The sequence spans 137 residues: Glutamate mutase sigma subunit (137 aa).

The B12-binding domain occupies 3-137 (KKTIVLGVIG…ADLKKDLNIE (135 aa)). Adenosylcob(III)alamin is bound by residues 13–17 (SDCHA), H16, 61–63 (SSL), and 93–97 (NIVVG).

It belongs to the methylaspartate mutase GlmS subunit family. In terms of assembly, heterotetramer composed of 2 epsilon subunits (GlmE) and 2 sigma subunits (GlmS). GlmE exists as a homodimer and GlmS as a monomer. Adenosylcob(III)alamin is required as a cofactor.

It catalyses the reaction (2S,3S)-3-methyl-L-aspartate = L-glutamate. The protein operates within amino-acid degradation; L-glutamate degradation via mesaconate pathway; acetate and pyruvate from L-glutamate: step 1/4. With respect to regulation, competitively inhibited by (2S,4S)-4-fluoroglutamate, 2-methyleneglutarate, (2R,3RS)-3-fluoroglutamate and (S)-3-methylitaconate. Functionally, catalyzes the carbon skeleton rearrangement of L-glutamate to L-threo-3-methylaspartate ((2S,3S)-3-methylaspartate). The protein is Glutamate mutase sigma subunit of Clostridium cochlearium.